Consider the following 398-residue polypeptide: Maltoporin (398 aa).

A signal peptide spans 1 to 30 (MTDKNNKRLFKVAPLATAIAASLFTVNASA).

The protein belongs to the porin LamB (TC 1.B.3) family. Homotrimer formed of three 18-stranded antiparallel beta-barrels, containing three independent channels.

It is found in the cell outer membrane. The enzyme catalyses beta-maltose(in) = beta-maltose(out). Involved in the transport of maltose and maltodextrins. In Hahella chejuensis (strain KCTC 2396), this protein is Maltoporin.